The chain runs to 443 residues: Protein UIP5 (443 aa).

The N-terminal stretch at 1–27 (MSRDVRAEKLAISLLILSLFLIFQLVA) is a signal peptide. Over 28 to 398 (EIYLNNGDQY…LFKVVLTIWH (371 aa)) the chain is Perinuclear space. A helical membrane pass occupies residues 399–420 (YSEILLLIMGIYLFSACIRVFQ). Residues 421–443 (RRFKKIRSRRKRAGSHSVGLLPM) are Cytoplasmic-facing.

It localises to the nucleus membrane. The protein is Protein UIP5 (UIP5) of Saccharomyces cerevisiae (strain ATCC 204508 / S288c) (Baker's yeast).